The following is a 383-amino-acid chain: 2-aminoethylphosphonate--pyruvate transaminase (383 aa).

Lys192 carries the N6-(pyridoxal phosphate)lysine modification.

It belongs to the class-V pyridoxal-phosphate-dependent aminotransferase family. PhnW subfamily. As to quaternary structure, homodimer. It depends on pyridoxal 5'-phosphate as a cofactor.

The catalysed reaction is (2-aminoethyl)phosphonate + pyruvate = phosphonoacetaldehyde + L-alanine. Its function is as follows. Involved in phosphonate degradation. The protein is 2-aminoethylphosphonate--pyruvate transaminase of Rhizobium meliloti (strain 1021) (Ensifer meliloti).